A 196-amino-acid chain; its full sequence is Nucleoid occlusion factor SlmA (196 aa).

Residues 6–66 enclose the HTH tetR-type domain; that stretch reads RNRREEILQA…GLIEFVEDTL (61 aa). Residues 29 to 48 constitute a DNA-binding region (H-T-H motif); the sequence is TTAKLAANLGVSEAALYRHF. Residues 108-135 are a coiled coil; that stretch reads DALMGEHDRLRGRMEDLFNRIESSIKQI.

It belongs to the nucleoid occlusion factor SlmA family. In terms of assembly, homodimer. Interacts with FtsZ.

It is found in the cytoplasm. Its subcellular location is the nucleoid. Its function is as follows. Required for nucleoid occlusion (NO) phenomenon, which prevents Z-ring formation and cell division over the nucleoid. Acts as a DNA-associated cell division inhibitor that binds simultaneously chromosomal DNA and FtsZ, and disrupts the assembly of FtsZ polymers. SlmA-DNA-binding sequences (SBS) are dispersed on non-Ter regions of the chromosome, preventing FtsZ polymerization at these regions. This is Nucleoid occlusion factor SlmA from Idiomarina loihiensis (strain ATCC BAA-735 / DSM 15497 / L2-TR).